Here is a 163-residue protein sequence, read N- to C-terminus: Cytosolic iron-sulfur assembly component 2B (163 aa).

Belongs to the MIP18 family. Component of the CIA complex. Component of the MMXD complex, which includes CIAO1, ERCC2, CIAO2B, MMS19 and SLC25A5. Interacts with CIAO1, ERCC2 and MMS19; the interactions are direct. Interacts with KIF4A; the interaction facilitates the transfer of Fe-S clusters to KIF4A to ensure proper localization of KIF4A to the mitotic machinery. Interacts with CCDC117; the interaction is direct.

The protein resides in the nucleus. It is found in the cytoplasm. It localises to the cytoskeleton. The protein localises to the spindle. Component of the cytosolic iron-sulfur protein assembly (CIA) complex, a multiprotein complex that mediates the incorporation of iron-sulfur cluster into extramitochondrial Fe/S proteins. As a CIA complex component and in collaboration with CIAO1 and MMS19, binds to and facilitates the assembly of most cytosolic-nuclear Fe/S proteins. As part of the mitotic spindle-associated MMXD complex it plays a role in chromosome segregation, probably by facilitating iron-sulfur cluster assembly into ERCC2/XPD. Together with MMS19, facilitates the transfer of Fe-S clusters to the motor protein KIF4A, which ensures proper localization of KIF4A to mitotic machinery components to promote the progression of mitosis. This Mus musculus (Mouse) protein is Cytosolic iron-sulfur assembly component 2B.